The following is a 312-amino-acid chain: DNA-directed RNA polymerase subunit alpha (312 aa).

Residues 1-229 are alpha N-terminal domain (alpha-NTD); that stretch reads MLQYQIDRID…ELFQPLATVS (229 aa). Residues 239-312 are alpha C-terminal domain (alpha-CTD); that stretch reads EPAAEAQIPL…ISIPQSRTSA (74 aa).

The protein belongs to the RNA polymerase alpha chain family. In cyanobacteria the RNAP catalytic core is composed of 2 alpha, 1 beta, 1 beta', 1 gamma and 1 omega subunit. When a sigma factor is associated with the core the holoenzyme is formed, which can initiate transcription.

It catalyses the reaction RNA(n) + a ribonucleoside 5'-triphosphate = RNA(n+1) + diphosphate. DNA-dependent RNA polymerase catalyzes the transcription of DNA into RNA using the four ribonucleoside triphosphates as substrates. The chain is DNA-directed RNA polymerase subunit alpha from Prochlorococcus marinus (strain NATL1A).